Here is a 327-residue protein sequence, read N- to C-terminus: Phenylalanine--tRNA ligase alpha subunit (327 aa).

Glu-252 lines the Mg(2+) pocket.

It belongs to the class-II aminoacyl-tRNA synthetase family. Phe-tRNA synthetase alpha subunit type 1 subfamily. As to quaternary structure, tetramer of two alpha and two beta subunits. Mg(2+) is required as a cofactor.

The protein localises to the cytoplasm. The enzyme catalyses tRNA(Phe) + L-phenylalanine + ATP = L-phenylalanyl-tRNA(Phe) + AMP + diphosphate + H(+). The sequence is that of Phenylalanine--tRNA ligase alpha subunit from Klebsiella pneumoniae subsp. pneumoniae (strain ATCC 700721 / MGH 78578).